An 83-amino-acid polypeptide reads, in one-letter code: Small ribosomal subunit protein uS17 (83 aa).

It belongs to the universal ribosomal protein uS17 family. Part of the 30S ribosomal subunit.

Its function is as follows. One of the primary rRNA binding proteins, it binds specifically to the 5'-end of 16S ribosomal RNA. This chain is Small ribosomal subunit protein uS17, found in Nitratiruptor sp. (strain SB155-2).